The sequence spans 92 residues: MHGNRPSLKDITLILDEIPEIVDLHCDEQFDSSEEENNHQLTEPDVQAYGVVTTCCKCGRTVRLVVECGQADLRELEQLFLKTLTLVCPHCA.

The segment at 1–43 (MHGNRPSLKDITLILDEIPEIVDLHCDEQFDSSEEENNHQLTE) is E7 terminal domain. Positions 24 to 28 (LHCDE) match the LXCXE motif; interaction with host RB1 and TMEM173/STING motif. A zinc finger lies at 55 to 91 (CCKCGRTVRLVVECGQADLRELEQLFLKTLTLVCPHC). Positions 73 to 81 (LRELEQLFL) match the Nuclear export signal motif.

It belongs to the papillomaviridae E7 protein family. In terms of assembly, homodimer. Homooligomer. Interacts with host RB1; this interaction induces dissociation of RB1-E2F1 complex thereby disrupting RB1 activity. Interacts with host EP300; this interaction represses EP300 transcriptional activity. Interacts with protein E2; this interaction inhibits E7 oncogenic activity. Interacts with host TMEM173/STING; this interaction impairs the ability of TMEM173/STING to sense cytosolic DNA and promote the production of type I interferon (IFN-alpha and IFN-beta). Post-translationally, highly phosphorylated.

It localises to the host cytoplasm. Its subcellular location is the host nucleus. Its function is as follows. Plays a role in viral genome replication by driving entry of quiescent cells into the cell cycle. Stimulation of progression from G1 to S phase allows the virus to efficiently use the cellular DNA replicating machinery to achieve viral genome replication. E7 protein has both transforming and trans-activating activities. Induces the disassembly of the E2F1 transcription factor from RB1, with subsequent transcriptional activation of E2F1-regulated S-phase genes. Interferes with host histone deacetylation mediated by HDAC1 and HDAC2, leading to transcription activation. Also plays a role in the inhibition of both antiviral and antiproliferative functions of host interferon alpha. Interaction with host TMEM173/STING impairs the ability of TMEM173/STING to sense cytosolic DNA and promote the production of type I interferon (IFN-alpha and IFN-beta). The polypeptide is Protein E7 (Homo sapiens (Human)).